A 437-amino-acid chain; its full sequence is Transcription factor TGAL5 (437 aa).

The disordered stretch occupies residues 33–75 (QEPYSNSQSVGSTTDSSSAQNTMSQAELVSPASMRSDSGQEQQ). A compositionally biased stretch (low complexity) spans 37 to 50 (SNSQSVGSTTDSSS). Residues 51 to 75 (AQNTMSQAELVSPASMRSDSGQEQQ) show a composition bias toward polar residues. One can recognise a bZIP domain in the interval 126–170 (DAKTERRLAQNREAARKSRLRKKAYVQQLETSRIRLQQIEQELQR). A basic motif region spans residues 128–148 (KTERRLAQNREAARKSRLRKK). Residues 154–168 (LETSRIRLQQIEQEL) are leucine-zipper. In terms of domain architecture, DOG1 spans 191–405 (AVMFDMDYTR…RALSSLWASR (215 aa)).

The protein belongs to the bZIP family. Interacts with NPR5/NH4, NH5.1 and NH5.2.

Its subcellular location is the nucleus. In terms of biological role, transcriptional regulator involved in defense response. This Oryza sativa subsp. japonica (Rice) protein is Transcription factor TGAL5.